The chain runs to 119 residues: Large ribosomal subunit protein bL20 (119 aa).

The protein belongs to the bacterial ribosomal protein bL20 family.

In terms of biological role, binds directly to 23S ribosomal RNA and is necessary for the in vitro assembly process of the 50S ribosomal subunit. It is not involved in the protein synthesizing functions of that subunit. The chain is Large ribosomal subunit protein bL20 from Thermoanaerobacter pseudethanolicus (strain ATCC 33223 / 39E) (Clostridium thermohydrosulfuricum).